Reading from the N-terminus, the 431-residue chain is MANVVVVGAQWGDEGKGKVVDIYTEFADDVVRYQGGNNAGHTLVVGDEKIVLHLIPSGILHQGKRCIIGNGVVLDPEVFIREITNLKAKGKFQDDGVLLLSESLHIIMPYHKRIDIAREANSGAKKIGTTGRGIGPAYEDKIGRRGIRLMDLLDKQVFSRKLKEFLEEKNFILEKLLGERPFTFEEIFDEYSAYADTLRNYVADTTLVLHQDLKAGKKLLFEGAQGTLLDVDHGTYPYVTSSSTCAGGACTGTGASPRDINEIIGISKAYVTRVGSGPFPTELEDADGEKLRHTGGEFGATTGRPRRCGWFDALVIKYAVRVNGLTGIALTKLDVLSDFESIKICTGYSYNDKFLNELPANLDVFEKCRPVYEEMPGWQSDITGVRSFEELPEKAKNYVKRLEELAGCPIVLVSVGPRRDETIMLKNPFEA.

GTP is bound by residues 12 to 18 (GDEGKGK) and 40 to 42 (GHT). The active-site Proton acceptor is aspartate 13. Positions 13 and 40 each coordinate Mg(2+). IMP contacts are provided by residues 13-16 (DEGK), 38-41 (NAGH), threonine 130, arginine 144, glutamine 225, threonine 240, and arginine 304. The Proton donor role is filled by histidine 41. 300–306 (ATTGRPR) provides a ligand contact to substrate. GTP contacts are provided by residues arginine 306, 332-334 (KLD), and 414-416 (SVG).

This sequence belongs to the adenylosuccinate synthetase family. In terms of assembly, homodimer. Mg(2+) is required as a cofactor.

It localises to the cytoplasm. It catalyses the reaction IMP + L-aspartate + GTP = N(6)-(1,2-dicarboxyethyl)-AMP + GDP + phosphate + 2 H(+). The protein operates within purine metabolism; AMP biosynthesis via de novo pathway; AMP from IMP: step 1/2. Its function is as follows. Plays an important role in the de novo pathway of purine nucleotide biosynthesis. Catalyzes the first committed step in the biosynthesis of AMP from IMP. The polypeptide is Adenylosuccinate synthetase (Geotalea uraniireducens (strain Rf4) (Geobacter uraniireducens)).